Consider the following 145-residue polypeptide: Superoxide dismutase [Mn/Fe] (145 aa).

Residues H10 and H64 each coordinate Fe(3+). Mn(2+) is bound by residues H10 and H64.

Belongs to the iron/manganese superoxide dismutase family. It depends on Mn(2+) as a cofactor. Fe(3+) serves as cofactor.

The catalysed reaction is 2 superoxide + 2 H(+) = H2O2 + O2. Its function is as follows. Destroys superoxide anion radicals which are normally produced within the cells and which are toxic to biological systems. Catalyzes the dismutation of superoxide anion radicals into O2 and H2O2 by successive reduction and oxidation of the transition metal ion at the active site. The protein is Superoxide dismutase [Mn/Fe] (sodA) of Streptococcus canis.